The sequence spans 241 residues: Adenylate kinase 3 (241 aa).

Residue Gly38–Thr43 coordinates ATP. The tract at residues Ala58–Val87 is NMP. Residues Thr59, Arg64, Glu85–Val87, Gly113–Arg116, and Gln120 contribute to the AMP site. The tract at residues Gly154–Asp191 is LID. Residue Arg155 participates in ATP binding. The AMP site is built by Arg188 and Arg199.

The protein belongs to the adenylate kinase family.

It is found in the cytoplasm. The enzyme catalyses AMP + ATP = 2 ADP. Its function is as follows. Catalyzes the reversible transfer of the terminal phosphate group between ATP and AMP. Plays an important role in cellular energy homeostasis and in adenine nucleotide metabolism. This Oryza sativa subsp. japonica (Rice) protein is Adenylate kinase 3 (ADK-A).